The primary structure comprises 297 residues: Formamidopyrimidine-DNA glycosylase (297 aa).

The active-site Schiff-base intermediate with DNA is Pro2. Glu3 (proton donor) is an active-site residue. Lys58 functions as the Proton donor; for beta-elimination activity in the catalytic mechanism. DNA contacts are provided by His106, Arg133, and Arg178. The FPG-type zinc finger occupies 263 to 297 (FVYDRAGEPCRICGTPIRQILQGQRSTFYCPHCQH). Arg287 serves as the catalytic Proton donor; for delta-elimination activity.

The protein belongs to the FPG family. Monomer. The cofactor is Zn(2+).

The enzyme catalyses Hydrolysis of DNA containing ring-opened 7-methylguanine residues, releasing 2,6-diamino-4-hydroxy-5-(N-methyl)formamidopyrimidine.. It carries out the reaction 2'-deoxyribonucleotide-(2'-deoxyribose 5'-phosphate)-2'-deoxyribonucleotide-DNA = a 3'-end 2'-deoxyribonucleotide-(2,3-dehydro-2,3-deoxyribose 5'-phosphate)-DNA + a 5'-end 5'-phospho-2'-deoxyribonucleoside-DNA + H(+). In terms of biological role, involved in base excision repair of DNA damaged by oxidation or by mutagenic agents. Acts as a DNA glycosylase that recognizes and removes damaged bases. Has a preference for oxidized purines, such as 7,8-dihydro-8-oxoguanine (8-oxoG). Has AP (apurinic/apyrimidinic) lyase activity and introduces nicks in the DNA strand. Cleaves the DNA backbone by beta-delta elimination to generate a single-strand break at the site of the removed base with both 3'- and 5'-phosphates. In Cupriavidus metallidurans (strain ATCC 43123 / DSM 2839 / NBRC 102507 / CH34) (Ralstonia metallidurans), this protein is Formamidopyrimidine-DNA glycosylase.